A 148-amino-acid chain; its full sequence is Puroindoline-B (148 aa).

Positions 1 to 19 are cleaved as a signal peptide; sequence MKTLFLLALLALVASTTFA. The propeptide occupies 20–29; the sequence is QYSEVGGWYN.

Post-translationally, five disulfide bonds are present. As to expression, endosperm and aleurone layer of developing kernels. In the aleurone layer, mainly localized to starch granules and the surface of the plasma membrane, forming a uniform layer, also abundant in the intercellular space. In the endosperm, mainly localized to starch granules and the plasma membrane, but less abundant in the intercellular space. Not found in roots or coleoptiles.

Its subcellular location is the membrane. It localises to the secreted. It is found in the extracellular space. Acts as a membranotoxin, probably through its antibacterial and antifungal activities, contributing to the defense mechanism of the plant against predators. Forms monovalent cation-selective ion channels in membranes. Has antibacterial activity against the Gram-positive bacteria S.aureus and C.michiganensis, and the Gram-negative bacteria E.coli, P.syringae pv phaseoli, A.tumefaciens and E.carotovora subsp carotovora. Acts synergistically with PINA against bacteria. Contributes to grain texture and hardness. This is Puroindoline-B (PINB) from Triticum aestivum (Wheat).